A 420-amino-acid polypeptide reads, in one-letter code: Glucose-1-phosphate adenylyltransferase (420 aa).

Alpha-D-glucose 1-phosphate-binding positions include Y107, G173, 188–189, and S206; that span reads EK.

It belongs to the bacterial/plant glucose-1-phosphate adenylyltransferase family. As to quaternary structure, homotetramer.

It carries out the reaction alpha-D-glucose 1-phosphate + ATP + H(+) = ADP-alpha-D-glucose + diphosphate. It functions in the pathway glycan biosynthesis; glycogen biosynthesis. Functionally, involved in the biosynthesis of ADP-glucose, a building block required for the elongation reactions to produce glycogen. Catalyzes the reaction between ATP and alpha-D-glucose 1-phosphate (G1P) to produce pyrophosphate and ADP-Glc. The protein is Glucose-1-phosphate adenylyltransferase of Shewanella baltica (strain OS155 / ATCC BAA-1091).